The sequence spans 493 residues: Beta-hexosaminidase Amuc_2018 (493 aa).

The signal sequence occupies residues 1–21; the sequence is MARPLPILGGILLSFSPPAEA. A substrate-binding site is contributed by Arg-122. Residues Asp-151 and His-214 each act as charge relay system in the active site. Zn(2+)-binding residues include Cys-227 and Cys-247. Substrate is bound at residue Asp-278. Glu-279 serves as the catalytic Charge relay system. Positions 288 and 291 each coordinate Zn(2+). Substrate contacts are provided by residues Trp-345, 373–375, and 421–423; these read YLD and WAE.

Belongs to the glycosyl hydrolase 20 family.

The catalysed reaction is Hydrolysis of terminal non-reducing N-acetyl-D-hexosamine residues in N-acetyl-beta-D-hexosaminides.. Its activity is regulated as follows. Significantly inhibited by the addition of sodium dodecyl sulfate (SDS), but not by EDTA, urea, 2-mercaptoethanol or Triton X-100. Strongly inhibited by Cu2(+) ions, in case of which the activity is decreased by 70%. No significant inhibition with Al(3+), Fe(3+), Ca(2+), Cd(2+), Mg(2+), Mn(2+), Ni(2+) and Zn(2+) ions. Strongly inhibited by PugNAc (O-(2-acetamido-2-deoxy-D-glucopyranosylideneamino) N-phenylcarbamate) in the sub-micromolar concentration range. PugNAc at a concentration of 0.5 mM decreases the activity by 50% and the addition of 1 mM PugNAc fully inhibits the enzyme. No significant reduction in the activity by alkylation using N-ethylmaleimide or 2-iodoacetamide. Hydrolyzes terminal GlcNAc residues from terminally unbranched N-glycans and from chitobiose. Hydrolyzes beta-1,6-linked N-acetylglucosamine and beta-1,4-linked N-acetylgalactosamine from pNP-alpha-GalNAc[beta1,3Gal]beta1,6GlcNAc and pNP-beta-GlcNAc-beta1,4-GalNAc substrates, respectively, as well as beta-1,2-linked N-acetylglucosamine units from the non-reducing end of N-glycans. Hydrolyzes GlcNAc residues linked to alpha1,3- or alpha1,6-mannose branch, but has low activity on substrates with more than one GlcNAc residue on one of the mannose branches. Releases terminal GlcNAc moieties from the N-glycopeptide Gly-Glu-Asn-(GlcNAc2Man3GlcNAc2)-Arg with high efficiency. Has moderate hydrolytic activity on the chitobiose moiety of N-glycopeptide substrate Gly-Glu-Asn-(GlcNAc2)-Arg. Does not hydrolyze GlcNAc residues from N-glycan structures bearing a bisecting GlcNAc moiety (beta1,4-linked GlcNAc to the beta1,4-linked core mannose). Potentially capable of cleaving the specific glycoside linkages in the process of mucin degradation in human intestinal tract. Hydrolyzes synthetic substrate pNP-beta-GlcNAc with high activity and pNP-beta-GalNAc to a lesser extent. Does not hydrolyze pNP-beta-glucose, pNP-beta-galactose, pNP-alpha-glucose, pNP-alpha-galactose, pNP-alpha-GlcNAc or pNP-alpha-fucose. This Akkermansia muciniphila (strain ATCC BAA-835 / DSM 22959 / JCM 33894 / BCRC 81048 / CCUG 64013 / CIP 107961 / Muc) protein is Beta-hexosaminidase Amuc_2018.